The following is a 173-amino-acid chain: Large ribosomal subunit protein uL16 (173 aa).

It belongs to the universal ribosomal protein uL16 family.

The chain is Large ribosomal subunit protein uL16 from Methanococcus maripaludis (strain C5 / ATCC BAA-1333).